A 275-amino-acid chain; its full sequence is Catechol 1,2-dioxygenase 2 (275 aa).

4 residues coordinate Fe cation: Tyr158, Tyr192, His216, and His218.

Belongs to the intradiol ring-cleavage dioxygenase family. In terms of assembly, homodimer. Fe(3+) is required as a cofactor.

The enzyme catalyses catechol + O2 = cis,cis-muconate + 2 H(+). It functions in the pathway aromatic compound metabolism; beta-ketoadipate pathway; 5-oxo-4,5-dihydro-2-furylacetate from catechol: step 1/3. Functionally, can cleave 4-methyl-, 4-chloro-, and 3-methoxycatechol at lower rates than catechol, but has no activity with 4-nitrocatechol or protocatechuic acid. In Acinetobacter lwoffii, this protein is Catechol 1,2-dioxygenase 2 (catA2).